The following is a 326-amino-acid chain: Ketol-acid reductoisomerase (NADP(+)) (326 aa).

The 180-residue stretch at methionine 1–cysteine 180 folds into the KARI N-terminal Rossmann domain. NADP(+) contacts are provided by residues tyrosine 24–glutamine 27, arginine 47, and serine 51. Histidine 106 is a catalytic residue. An NADP(+)-binding site is contributed by glycine 132. Residues threonine 181–asparagine 326 form the KARI C-terminal knotted domain. The Mg(2+) site is built by aspartate 189, glutamate 193, glutamate 225, and glutamate 229. Residue serine 250 coordinates substrate.

This sequence belongs to the ketol-acid reductoisomerase family. The cofactor is Mg(2+).

It catalyses the reaction (2R)-2,3-dihydroxy-3-methylbutanoate + NADP(+) = (2S)-2-acetolactate + NADPH + H(+). The catalysed reaction is (2R,3R)-2,3-dihydroxy-3-methylpentanoate + NADP(+) = (S)-2-ethyl-2-hydroxy-3-oxobutanoate + NADPH + H(+). It functions in the pathway amino-acid biosynthesis; L-isoleucine biosynthesis; L-isoleucine from 2-oxobutanoate: step 2/4. Its pathway is amino-acid biosynthesis; L-valine biosynthesis; L-valine from pyruvate: step 2/4. In terms of biological role, involved in the biosynthesis of branched-chain amino acids (BCAA). Catalyzes an alkyl-migration followed by a ketol-acid reduction of (S)-2-acetolactate (S2AL) to yield (R)-2,3-dihydroxy-isovalerate. In the isomerase reaction, S2AL is rearranged via a Mg-dependent methyl migration to produce 3-hydroxy-3-methyl-2-ketobutyrate (HMKB). In the reductase reaction, this 2-ketoacid undergoes a metal-dependent reduction by NADPH to yield (R)-2,3-dihydroxy-isovalerate. The polypeptide is Ketol-acid reductoisomerase (NADP(+)) (Akkermansia muciniphila (strain ATCC BAA-835 / DSM 22959 / JCM 33894 / BCRC 81048 / CCUG 64013 / CIP 107961 / Muc)).